The primary structure comprises 188 residues: Probable chorismate pyruvate-lyase (188 aa).

Substrate contacts are provided by Arg77, Leu115, and Glu174.

The protein belongs to the UbiC family.

The protein localises to the cytoplasm. It carries out the reaction chorismate = 4-hydroxybenzoate + pyruvate. Its pathway is cofactor biosynthesis; ubiquinone biosynthesis. Removes the pyruvyl group from chorismate, with concomitant aromatization of the ring, to provide 4-hydroxybenzoate (4HB) for the ubiquinone pathway. This chain is Probable chorismate pyruvate-lyase, found in Shewanella loihica (strain ATCC BAA-1088 / PV-4).